The sequence spans 495 residues: MASPGNHAIVAPGWTRSEDGSLTRPLDLVENWLLARIQRANTPPGREAEGLTYKLKLRLPQDIDDPIPYLRRAWLVFRYVQPLIGAIYPPYSERDETGRYLVTVPLMDPEEWLRLSFHVNQGTQAVFRDVDDAGKIFQPRPTAMAYWFPPSSTLIIRSTHLRFDAVGIYKATNTFMLGLESVFRLGLDANLDCYTTDVKQPSLPPGIDYILGFPPQETPVPHRVERAVDELMRHWHHGLYSLSLPVREGSEDAAPANTQHLVTLFDEPTLEAIVAGCKKLGVSVSAAVHASIVRVWASFPQQQHTGARNMLIPLVANLRPLLDPKWVVPDYALGLCIFVVPFCLTGGFEDLTQRLGAVYSRDLSALPSDPAGDPVSFLELLPLYESREAAFLGSLPVAGCPPFRVPNLSSLGVLERYLARAYGKKGAQAPVCEIEDVALVNATTDPTIEFQLFTFRGTMRLYLYYNDAYYTEDFLAPVMEMVRDSLLQELGLGGS.

Its subcellular location is the nucleus. In terms of biological role, transcriptional regulator that may regulate the expression of the loline biosynthesis cluster 1, one of the 2 clusters involved in the biosynthesis of loline alkaloids, potent insecticidal agents composed of a pyrrolizidine ring system and an uncommon ether bridge linking carbons 2 and 7. The chain is Loline biosynthesis cluster 1 transcription factor lolU1 from Epichloe uncinata (Endophyte fungus).